We begin with the raw amino-acid sequence, 345 residues long: Probable dual-specificity RNA methyltransferase RlmN (345 aa).

Residue Glu98 is the Proton acceptor of the active site. Residues 104-332 (TYKRLTVCVS…VSIRYSRGLE (229 aa)) enclose the Radical SAM core domain. Cys111 and Cys337 are disulfide-bonded. 3 residues coordinate [4Fe-4S] cluster: Cys118, Cys122, and Cys125. S-adenosyl-L-methionine is bound by residues 165–166 (GE), Ser195, 218–220 (SLH), and Asn294. Cys337 serves as the catalytic S-methylcysteine intermediate.

The protein belongs to the radical SAM superfamily. RlmN family. The cofactor is [4Fe-4S] cluster.

The protein localises to the cytoplasm. The enzyme catalyses adenosine(2503) in 23S rRNA + 2 reduced [2Fe-2S]-[ferredoxin] + 2 S-adenosyl-L-methionine = 2-methyladenosine(2503) in 23S rRNA + 5'-deoxyadenosine + L-methionine + 2 oxidized [2Fe-2S]-[ferredoxin] + S-adenosyl-L-homocysteine. It catalyses the reaction adenosine(37) in tRNA + 2 reduced [2Fe-2S]-[ferredoxin] + 2 S-adenosyl-L-methionine = 2-methyladenosine(37) in tRNA + 5'-deoxyadenosine + L-methionine + 2 oxidized [2Fe-2S]-[ferredoxin] + S-adenosyl-L-homocysteine. Its function is as follows. Specifically methylates position 2 of adenine 2503 in 23S rRNA and position 2 of adenine 37 in tRNAs. In Trichodesmium erythraeum (strain IMS101), this protein is Probable dual-specificity RNA methyltransferase RlmN.